A 232-amino-acid chain; its full sequence is Transcriptional regulatory protein CpxR (232 aa).

In terms of domain architecture, Response regulatory spans 3–115 (KILLVDDDRE…ELVARIRAIL (113 aa)). The residue at position 51 (aspartate 51) is a 4-aspartylphosphate. A DNA-binding region (ompR/PhoB-type) is located at residues 131–230 (SPTLEVDALS…LRGRGYLMVS (100 aa)).

In terms of assembly, interacts with cognate sensor kinase CpxA. Phosphorylated by CpxA.

The protein resides in the cytoplasm. The two-component system is activated by envelope stress such as overexpression of some (misfolded) periplasmic proteins. Functionally, response regulator member of the two-component regulatory system CpxA/CpxR which responds to envelope stress response by activating or, in some cases, repressing expression of downstream genes. Binds to the promoter regions of various genes in vitro, including ompC, cpxP, ryhB and mrkA and, when CpxR is phosphorylated, pecO. Represses expression of the major pilin of type 3 fimbriae MrkA as well as that of type 1 fimbriae FimA. Repression of expression of MrkA appears to be indirect, mediated by activation of the iron homeostasis regulator RyhB. The sequence is that of Transcriptional regulatory protein CpxR from Klebsiella pneumoniae subsp. pneumoniae (strain HS11286).